We begin with the raw amino-acid sequence, 436 residues long: Methylenetetrahydrofolate--tRNA-(uracil-5-)-methyltransferase TrmFO (436 aa).

Position 7 to 12 (7 to 12) interacts with FAD; the sequence is GAGLAG.

Belongs to the MnmG family. TrmFO subfamily. Requires FAD as cofactor.

Its subcellular location is the cytoplasm. The catalysed reaction is uridine(54) in tRNA + (6R)-5,10-methylene-5,6,7,8-tetrahydrofolate + NADH + H(+) = 5-methyluridine(54) in tRNA + (6S)-5,6,7,8-tetrahydrofolate + NAD(+). The enzyme catalyses uridine(54) in tRNA + (6R)-5,10-methylene-5,6,7,8-tetrahydrofolate + NADPH + H(+) = 5-methyluridine(54) in tRNA + (6S)-5,6,7,8-tetrahydrofolate + NADP(+). Its function is as follows. Catalyzes the folate-dependent formation of 5-methyl-uridine at position 54 (M-5-U54) in all tRNAs. The polypeptide is Methylenetetrahydrofolate--tRNA-(uracil-5-)-methyltransferase TrmFO (Caldicellulosiruptor bescii (strain ATCC BAA-1888 / DSM 6725 / KCTC 15123 / Z-1320) (Anaerocellum thermophilum)).